Here is a 687-residue protein sequence, read N- to C-terminus: Chloride channel protein ClC-Kb (687 aa).

The Cytoplasmic segment spans residues 1–50 (MEELVGLREGASKKPVPLQELWGPCPRIRRNIQGGLEWLKERLFRVGEDW). 2 helical membrane passes run 51–82 (YFLV…KWLY) and 91–111 (LRYL…SGFS). The segment at residues 116–127 (PSSGGSGIPEVK) is an intramembrane region (helical). S121 serves as a coordination point for chloride. The next 2 membrane-spanning stretches (helical) occupy residues 141–160 (IKNF…TGST) and 161–180 (IFLG…AAYL). The segment at residues 203 to 224 (AGAAVGVATVFAAPISGVLFSI) is an intramembrane region (helical). The helical transmembrane segment at 236–255 (YWRGFFAATCGAFMFHLLAV) threads the bilayer. 4 residues coordinate Ca(2+): E259, E261, D278, and E281. 2 consecutive transmembrane segments (helical) span residues 282–310 (IFFF…LFFL) and 325–342 (PLYS…TYPP). The helical intramembrane region spans 349–360 (ASRLSMSEHLET). A run of 2 helical transmembrane segments spans residues 400–420 (GTLV…TTIP) and 421–440 (IPAG…GRLF). F426 is a binding site for chloride. The helical intramembrane region spans 464–496 (GAYALAGAAAFSGAVTHTLSTALLAFEVTGQLV). The chain crosses the membrane as a helical span at residues 500-520 (PVLMAVLAANAISQSFQPSFY). Residues 521-687 (DGTIIVKKLP…STLTNPPAPK (167 aa)) are Cytoplasmic-facing. 2 CBS domains span residues 551–609 (MNCA…EPAS) and 626–687 (CPTQ…PAPK).

The protein belongs to the chloride channel (TC 2.A.49) family. CLCNKB subfamily. Homodimer. Interacts with BSND. N-glycosylated. As to expression, specifically expressed in the kidney, predominantly in the outer medulla and cortex. All nephron segments expressing BSND also express CLCNK proteins.

Its subcellular location is the basolateral cell membrane. The enzyme catalyses chloride(in) = chloride(out). The catalysed reaction is iodide(out) = iodide(in). It catalyses the reaction nitrate(in) = nitrate(out). It carries out the reaction bromide(in) = bromide(out). Its function is as follows. Anion-selective channel permeable to small monovalent anions with ion selectivity for chloride &gt; bromide &gt; nitrate &gt; iodide. Forms a homodimeric channel where each subunit has its own ion conduction pathway. May conduct double-barreled currents controlled by two types of gates, two fast gates that control each subunit independently and a slow common gate that opens and shuts off both subunits simultaneously. Assembles with the regulatory subunit BSND/Barttin for sorting at the basolateral plasma membrane domain and functional switch to the ion conducting state. CLCNKB:BSND channels display mostly a linear current-voltage relationship controlled by common gate. Mediates chloride conductance along nephron segments, namely the thick ascending limb of Henle's loop, convoluted tubule and the collecting duct, contributing to the maintenance of systemic acid-base and electrolyte homeostasis. Conducts chloride currents in the stria vascularis of the inner ear to establish the endocochlear potential necessary for normal hearing. The protein is Chloride channel protein ClC-Kb of Mus musculus (Mouse).